Reading from the N-terminus, the 728-residue chain is 1,4-alpha-glucan branching enzyme GlgB (728 aa).

Residue aspartate 405 is the Nucleophile of the active site. Residue glutamate 458 is the Proton donor of the active site.

Belongs to the glycosyl hydrolase 13 family. GlgB subfamily. As to quaternary structure, monomer.

It carries out the reaction Transfers a segment of a (1-&gt;4)-alpha-D-glucan chain to a primary hydroxy group in a similar glucan chain.. It functions in the pathway glycan biosynthesis; glycogen biosynthesis. In terms of biological role, catalyzes the formation of the alpha-1,6-glucosidic linkages in glycogen by scission of a 1,4-alpha-linked oligosaccharide from growing alpha-1,4-glucan chains and the subsequent attachment of the oligosaccharide to the alpha-1,6 position. In Shigella dysenteriae serotype 1 (strain Sd197), this protein is 1,4-alpha-glucan branching enzyme GlgB.